The chain runs to 330 residues: Aspartate--ammonia ligase (330 aa).

It belongs to the class-II aminoacyl-tRNA synthetase family. AsnA subfamily.

Its subcellular location is the cytoplasm. The enzyme catalyses L-aspartate + NH4(+) + ATP = L-asparagine + AMP + diphosphate + H(+). Its pathway is amino-acid biosynthesis; L-asparagine biosynthesis; L-asparagine from L-aspartate (ammonia route): step 1/1. This is Aspartate--ammonia ligase from Salmonella schwarzengrund (strain CVM19633).